A 609-amino-acid polypeptide reads, in one-letter code: MSALTKIREGLAREDNTHVAGTLAPHEKEIHETPEVVSEVGPDHDKEATAGAINPDDKGNDSDVPSEDVQNGVKEIQAITLTWGKGSLAALLCLIWTLFLISGFRGSFYLVLVPYVTSEWSAHSLMTTIPIVSDAMTAACYIPMAKALDVWGRAEGFLLMSGFATLGLILMAVSQNLATFCAAQVFYSVGWGGMIYAVGVLAADASNLRNRGLAFAFTSSPYMITAFAGSKAAAAFVIDVKNWRWGFGWIALVLPCVTIPLFLVLKVNLRKAFKNGTVTKTTRNRGFFGSIWWAFNEFDVIGIFLFGGGLVVFLLPFNLAGHAPNGWSTGYIIAMIIVGFCTLIFFGVWEYWLAPVPFLQGRFLLDRSVVAACMIDLTYQVSYYTWNYFFTSFLQVVVNLGPAEAGYVNSTFQVVSGVLLFIVGFLIRKTGFYKWTFYFAVPIYIFALGLMIHFRAPNQYVGYIIMCEIFISIGGAVFILVMQLAVLAAVAHQYVAAALATLYVAGGVGGAVGGAISGAIWTNSFIPQLIKRLPESEVANATLIAGSIVNQLAYPVDSPARLAIQESYGFAQIRMLAAGVGIASLFFIWVPMLRNIDVKKLKQTKGLVL.

Composition is skewed to basic and acidic residues over residues 1–17 (MSALTKIREGLAREDNT) and 25–34 (PHEKEIHETP). Residues 1 to 69 (MSALTKIREG…NDSDVPSEDV (69 aa)) form a disordered region. The next 14 helical transmembrane spans lie at 81–101 (LTWGKGSLAALLCLIWTLFLI), 125–145 (LMTTIPIVSDAMTAACYIPMA), 154–174 (AEGFLLMSGFATLGLILMAVS), 182–202 (AAQVFYSVGWGGMIYAVGVLA), 220–240 (SPYMITAFAGSKAAAAFVIDV), 245–265 (WGFGWIALVLPCVTIPLFLVL), 300–320 (VIGIFLFGGGLVVFLLPFNLA), 329–349 (TGYIIAMIIVGFCTLIFFGVW), 368–390 (SVVAACMIDLTYQVSYYTWNYFF), 407–427 (YVNSTFQVVSGVLLFIVGFLI), 432–452 (FYKWTFYFAVPIYIFALGLMI), 469–489 (IFISIGGAVFILVMQLAVLAA), 496–516 (AAALATLYVAGGVGGAVGGAI), and 573–593 (IRMLAAGVGIASLFFIWVPML).

This sequence belongs to the major facilitator superfamily.

Its subcellular location is the cell membrane. In terms of biological role, major facilitator transporter involved in extracellular siderophore uptake. Gibberella zeae produces extracellular coprogen-type siderophores as well as the intracellular siderophore ferricrocin. The role of extracellular siderophores is to supply iron to the fungus during plant infection, and the intracellular ferricrocin is required for intracellular iron distribution and storage with a crucial role in ascus and ascospore development. This chain is MFS siderochrome iron transporter 1, found in Gibberella zeae (strain ATCC MYA-4620 / CBS 123657 / FGSC 9075 / NRRL 31084 / PH-1) (Wheat head blight fungus).